We begin with the raw amino-acid sequence, 506 residues long: Aldehyde dehydrogenase [NAD(P)+] 2 (506 aa).

E268 functions as the Proton acceptor in the catalytic mechanism. The active-site Nucleophile is C302.

The protein belongs to the aldehyde dehydrogenase family.

The protein resides in the cytoplasm. The catalysed reaction is an aldehyde + NAD(+) + H2O = a carboxylate + NADH + 2 H(+). The enzyme catalyses 3-aminopropanal + NAD(+) + H2O = beta-alanine + NADH + 2 H(+). Its function is as follows. Cytoplasmic aldehyde dehydrogenase involved in ethanol oxidation. Involved in pantothenic acid production through the conversion of 3-aminopropanal to beta-alanine, an intermediate in pantothenic acid (vitamin B5) and coenzyme A (CoA) biosynthesis. This chain is Aldehyde dehydrogenase [NAD(P)+] 2 (ALD3), found in Saccharomyces cerevisiae (strain ATCC 204508 / S288c) (Baker's yeast).